A 563-amino-acid polypeptide reads, in one-letter code: Dihydroxy-acid dehydratase (563 aa).

Aspartate 79 is a binding site for Mg(2+). Position 120 (cysteine 120) interacts with [2Fe-2S] cluster. Mg(2+) is bound by residues aspartate 121 and lysine 122. At lysine 122 the chain carries N6-carboxylysine. Residue cysteine 193 coordinates [2Fe-2S] cluster. Glutamate 451 contacts Mg(2+). The active-site Proton acceptor is serine 477.

This sequence belongs to the IlvD/Edd family. As to quaternary structure, homodimer. The cofactor is [2Fe-2S] cluster. It depends on Mg(2+) as a cofactor.

The catalysed reaction is (2R)-2,3-dihydroxy-3-methylbutanoate = 3-methyl-2-oxobutanoate + H2O. The enzyme catalyses (2R,3R)-2,3-dihydroxy-3-methylpentanoate = (S)-3-methyl-2-oxopentanoate + H2O. It functions in the pathway amino-acid biosynthesis; L-isoleucine biosynthesis; L-isoleucine from 2-oxobutanoate: step 3/4. Its pathway is amino-acid biosynthesis; L-valine biosynthesis; L-valine from pyruvate: step 3/4. Functionally, functions in the biosynthesis of branched-chain amino acids. Catalyzes the dehydration of (2R,3R)-2,3-dihydroxy-3-methylpentanoate (2,3-dihydroxy-3-methylvalerate) into 2-oxo-3-methylpentanoate (2-oxo-3-methylvalerate) and of (2R)-2,3-dihydroxy-3-methylbutanoate (2,3-dihydroxyisovalerate) into 2-oxo-3-methylbutanoate (2-oxoisovalerate), the penultimate precursor to L-isoleucine and L-valine, respectively. This is Dihydroxy-acid dehydratase from Sulfurovum sp. (strain NBC37-1).